The following is a 508-amino-acid chain: Glycerol kinase (508 aa).

Residue Thr-15 participates in ADP binding. ATP-binding residues include Thr-15, Ser-16, and Ser-17. Thr-15 is a sn-glycerol 3-phosphate binding site. Residue Arg-19 participates in ADP binding. Sn-glycerol 3-phosphate-binding residues include Arg-85, Glu-86, Tyr-138, and Asp-251. Residues Arg-85, Glu-86, Tyr-138, Asp-251, and Gln-252 each coordinate glycerol. Residues Thr-273, Gly-317, and Gly-419 each coordinate ADP. Positions 273, 317, and 419 each coordinate ATP.

The protein belongs to the FGGY kinase family.

The catalysed reaction is glycerol + ATP = sn-glycerol 3-phosphate + ADP + H(+). The protein operates within polyol metabolism; glycerol degradation via glycerol kinase pathway; sn-glycerol 3-phosphate from glycerol: step 1/1. With respect to regulation, inhibited by fructose 1,6-bisphosphate (FBP). Its function is as follows. Key enzyme in the regulation of glycerol uptake and metabolism. Catalyzes the phosphorylation of glycerol to yield sn-glycerol 3-phosphate. This is Glycerol kinase from Mycoplasma genitalium (strain ATCC 33530 / DSM 19775 / NCTC 10195 / G37) (Mycoplasmoides genitalium).